We begin with the raw amino-acid sequence, 326 residues long: Ornithine carbamoyltransferase (326 aa).

Residues 57 to 60, Gln-84, Arg-108, and 135 to 138 contribute to the carbamoyl phosphate site; these read STRT and HPTQ. L-ornithine contacts are provided by residues Asn-169, Asp-233, and 237 to 238; that span reads SM. 275 to 276 provides a ligand contact to carbamoyl phosphate; it reads CL.

This sequence belongs to the aspartate/ornithine carbamoyltransferase superfamily. OTCase family.

It localises to the cytoplasm. It carries out the reaction carbamoyl phosphate + L-ornithine = L-citrulline + phosphate + H(+). Its pathway is amino-acid biosynthesis; L-arginine biosynthesis; L-arginine from L-ornithine and carbamoyl phosphate: step 1/3. Functionally, reversibly catalyzes the transfer of the carbamoyl group from carbamoyl phosphate (CP) to the N(epsilon) atom of ornithine (ORN) to produce L-citrulline. This Escherichia coli O6:K15:H31 (strain 536 / UPEC) protein is Ornithine carbamoyltransferase.